A 78-amino-acid chain; its full sequence is Sec-independent protein translocase protein TatA (78 aa).

The helical transmembrane segment at 1 to 21 threads the bilayer; sequence MGGISIWQLLIIAVIVVLLFG. Positions 47–59 are enriched in basic and acidic residues; it reads ESEKKDADFEPKS. Residues 47–78 form a disordered region; sequence ESEKKDADFEPKSLEQQNKQAATESKKDKEQA. Residues 60–69 show a composition bias toward polar residues; it reads LEQQNKQAAT.

Belongs to the TatA/E family. As to quaternary structure, the Tat system comprises two distinct complexes: a TatABC complex, containing multiple copies of TatA, TatB and TatC subunits, and a separate TatA complex, containing only TatA subunits. Substrates initially bind to the TatABC complex, which probably triggers association of the separate TatA complex to form the active translocon.

It localises to the cell inner membrane. Part of the twin-arginine translocation (Tat) system that transports large folded proteins containing a characteristic twin-arginine motif in their signal peptide across membranes. TatA could form the protein-conducting channel of the Tat system. This is Sec-independent protein translocase protein TatA from Vibrio vulnificus (strain YJ016).